Consider the following 316-residue polypeptide: N-acetyl-gamma-glutamyl-phosphate reductase (316 aa).

Residue Cys136 is part of the active site.

It belongs to the NAGSA dehydrogenase family. Type 1 subfamily.

The protein localises to the cytoplasm. It carries out the reaction N-acetyl-L-glutamate 5-semialdehyde + phosphate + NADP(+) = N-acetyl-L-glutamyl 5-phosphate + NADPH + H(+). It functions in the pathway amino-acid biosynthesis; L-arginine biosynthesis; N(2)-acetyl-L-ornithine from L-glutamate: step 3/4. Catalyzes the NADPH-dependent reduction of N-acetyl-5-glutamyl phosphate to yield N-acetyl-L-glutamate 5-semialdehyde. This is N-acetyl-gamma-glutamyl-phosphate reductase from Xanthomonas campestris pv. campestris (strain B100).